A 946-amino-acid chain; its full sequence is Phosphatidylinositol 4,5-bisphosphate 5-phosphatase INP51 (946 aa).

In terms of domain architecture, SAC spans 151–480; it reads LKKLFSDGTF…YYWLDRTYTK (330 aa). 2 disordered regions span residues 872–902 and 927–946; these read SDSI…SDLK and PKRD…FIER. The segment covering 936–946 has biased composition (acidic residues); sequence ENEDEPLFIER.

The protein belongs to the synaptojanin family. This sequence in the central section; belongs to the inositol 1,4,5-trisphosphate 5-phosphatase family. As to quaternary structure, interacts with IRS4 and TAX4.

The protein resides in the cytoplasm. It localises to the cytoskeleton. It is found in the actin patch. It catalyses the reaction a 1,2-diacyl-sn-glycero-3-phospho-(1D-myo-inositol-4,5-bisphosphate) + H2O = a 1,2-diacyl-sn-glycero-3-phospho-(1D-myo-inositol 4-phosphate) + phosphate. Its activity is regulated as follows. IRS4 and TAX4 are both positive regulator of INP51 activity and phosphatidylinositol 4,5-bisphosphate turnover. Controls the cellular levels and subcellular distribution of phosphatidylinositol 4,5-bisphosphate (PtdIns(4,5)P2). Does not utilize phosphatidylinositol 3,5-bisphosphate (PtdIns(3,5)P2), nor phosphatidylinositol 3-phosphate (PtdIns(3)P) and phosphatidylinositol 4-phosphate (PtdIns(4)P). Plays an essential role in a TGN (trans Golgi network)-to-early endosome pathway. Involved in endocytosis and acts as a negative regulator of the Slm pathway which modulates polarized actin assembly and growth. The protein is Phosphatidylinositol 4,5-bisphosphate 5-phosphatase INP51 (INP51) of Saccharomyces cerevisiae (strain ATCC 204508 / S288c) (Baker's yeast).